We begin with the raw amino-acid sequence, 267 residues long: 4-hydroxy-tetrahydrodipicolinate reductase (267 aa).

Residues 8-13 (GAAGRM) and D34 contribute to the NAD(+) site. R35 is a binding site for NADP(+). NAD(+)-binding positions include 98-100 (GTT) and 122-125 (AANF). The active-site Proton donor/acceptor is H155. H156 is a (S)-2,3,4,5-tetrahydrodipicolinate binding site. Residue K159 is the Proton donor of the active site. Position 165 to 166 (165 to 166 (GT)) interacts with (S)-2,3,4,5-tetrahydrodipicolinate.

Belongs to the DapB family.

The protein localises to the cytoplasm. It carries out the reaction (S)-2,3,4,5-tetrahydrodipicolinate + NAD(+) + H2O = (2S,4S)-4-hydroxy-2,3,4,5-tetrahydrodipicolinate + NADH + H(+). It catalyses the reaction (S)-2,3,4,5-tetrahydrodipicolinate + NADP(+) + H2O = (2S,4S)-4-hydroxy-2,3,4,5-tetrahydrodipicolinate + NADPH + H(+). The protein operates within amino-acid biosynthesis; L-lysine biosynthesis via DAP pathway; (S)-tetrahydrodipicolinate from L-aspartate: step 4/4. Catalyzes the conversion of 4-hydroxy-tetrahydrodipicolinate (HTPA) to tetrahydrodipicolinate. The chain is 4-hydroxy-tetrahydrodipicolinate reductase from Pseudomonas putida (strain W619).